A 332-amino-acid chain; its full sequence is Elongin-A (332 aa).

One can recognise an F-box domain in the interval 24 to 68; it reads LEDIGHMPYALVRRVLLKMSAEQLLRLERASPALLLEDEEAWQQL. Residues 228-332 form a disordered region; that stretch reads TPSAQPAASL…KPRVYIHTPR (105 aa). The segment covering 296–309 has biased composition (polar residues); sequence LFSSPALSTLLPQQ. Positions 320–332 are enriched in basic residues; it reads PPKKPRVYIHTPR.

It belongs to the ELA1 family. In terms of assembly, heterodimer with ELC1. Component of a CRL3 E3 ubiquitin ligase complex consisting of a cullin, the linker protein ELC1, the substrate receptor ELA1, and a RING protein. Interacts with the large RNA polymerase II subunit RPO21 in a manner dependent on DEF1.

Its function is as follows. As part of the CRL3 E3 ubiquitin ligase complex; polyubiquitylates monoubiquitylated RNA polymerase II subunit RPO21 to trigger its proteolysis; plays a role in global genomic repair. This chain is Elongin-A (ELA1), found in Eremothecium gossypii (strain ATCC 10895 / CBS 109.51 / FGSC 9923 / NRRL Y-1056) (Yeast).